The primary structure comprises 557 residues: Predicted GPI-anchored protein 17 (557 aa).

Residues 1–19 (MKFSTVFTAIFALGTAVSA) form the signal peptide. N-linked (GlcNAc...) asparagine glycosylation is found at Asn62, Asn116, Asn284, and Asn309. A coiled-coil region spans residues 320–355 (LRKREYNDAVEAALRDIQKREEGIDDVEIALRKMKR). 3 N-linked (GlcNAc...) asparagine glycosylation sites follow: Asn376, Asn471, and Asn520. The GPI-anchor amidated asparagine moiety is linked to residue Asn533. Positions 534–557 (AGSSYGPGFYSTIFAVFGLFAMMI) are cleaved as a propeptide — removed in mature form.

Substrate for cleavage by KEX2 in vitro.

It localises to the cell membrane. Predicted GPI-anchored protein which may have a role during host infection. This chain is Predicted GPI-anchored protein 17 (PGA17), found in Candida albicans (strain SC5314 / ATCC MYA-2876) (Yeast).